A 635-amino-acid polypeptide reads, in one-letter code: Threonine--tRNA ligase (635 aa).

In terms of domain architecture, TGS spans 1–61 (MINISFPDGS…DNDCKLRILT (61 aa)). Residues 242–533 (DHRKLGRELD…LIEEYAGRFP (292 aa)) form a catalytic region. Positions 333, 384, and 510 each coordinate Zn(2+).

This sequence belongs to the class-II aminoacyl-tRNA synthetase family. Homodimer. It depends on Zn(2+) as a cofactor.

The protein resides in the cytoplasm. It carries out the reaction tRNA(Thr) + L-threonine + ATP = L-threonyl-tRNA(Thr) + AMP + diphosphate + H(+). Its function is as follows. Catalyzes the attachment of threonine to tRNA(Thr) in a two-step reaction: L-threonine is first activated by ATP to form Thr-AMP and then transferred to the acceptor end of tRNA(Thr). Also edits incorrectly charged L-seryl-tRNA(Thr). The chain is Threonine--tRNA ligase from Rickettsia peacockii (strain Rustic).